Reading from the N-terminus, the 440-residue chain is Tripartite motif-containing protein 14 (440 aa).

The segment at 17–59 adopts a B box-type zinc-finger fold; it reads AYGWRCPEHSERPAELFCRRCGRCVCALCPVLGAHRGHPVGLA. Residues cysteine 22, histidine 25, cysteine 45, and histidine 51 each contribute to the Zn(2+) site. Positions 247–440 constitute a B30.2/SPRY domain; that stretch reads ALLKTSPSPE…EGPISIPRLP (194 aa).

The protein belongs to the TRIM/RBCC family. As to quaternary structure, interacts with MAVS. Interacts with WRNIP1 and PPP6C; these interactions positively regulate the RIG-I signaling pathway. Interacts with CGAS; this interaction stabilizes CGAS and promotes type I interferon production. Interacts with USP14; this interaction mediates the cleavage of 'Lys-48'-linked ubiquitination of CGAS. Interacts with TBK1. Interacts with SPI1. Interacts with KDM4D and USP14. In terms of processing, ubiquitinated. Undergoes 'Lys-63'-linked polyubiquitination; this modification allows IKBKG/NEMO recruitment to MAVS. Undergoes 'Lys-48'-linked polyubiquitination by RNF125; this modification mediates its degradation via the ubiquitin-proteasome pathway. In terms of tissue distribution, expressed with high level in spleen, thymus, liver and testis. Expressed with low level in the brain, kidney, and skeletal muscle. Expressed in various differentiation stages of B-lymphocytes.

It is found in the mitochondrion outer membrane. The protein resides in the cytoplasmic vesicle. Its subcellular location is the phagosome. Functionally, plays a role in the innate immune defense against viruses. Facilitates the type I IFN response by interacting with MAVS at the outer mitochondria membrane and thereby recruiting NF-kappa-B essential modulator IKBKG/NEMO to the MAVS signalosome, leading to the activation of both the IFN regulatory factor 3/IRF3 and NF-kappa-B pathways. Positively regulates the CGAS-induced type I interferon signaling pathway by stabilizing CGAS and inhibiting its autophagic degradation. Inhibits the transcriptional activity of SPI1 in a dose-dependent manner. Also inhibits OPTN-mediated selective autophagic degradation of KDM4D and thereby negatively regulates H3K9me2 and H3K9me3. Mechanistically, recruits USP14 to remove the 'Lys-63'-linked ubiquitination of KDM4D, preventing its recognition by OPTN and subsequent degradation. Plays an essential role in the innate immune defense against viruses and bacteria. Facilitates the type I IFN response by interacting with MAVS at the outer mitochondria membrane and thereby recruiting NF-kappa-B essential modulator IKBKG/NEMO to the MAVS signalosome, leading to the activation of both the IFN regulatory factor 3/IRF3 and NF-kappa-B pathways. Positively regulates the CGAS-induced type I interferon signaling pathway by stabilizing CGAS and inhibiting its autophagic degradation. Acts as a scaffold between TBK1 and STAT3 to promote phosphorylation of STAT3 and resolve interferon-stimulated gene (ISG) expression. Inhibits the transcriptional activity of SPI1 in a dose-dependent manner. The polypeptide is Tripartite motif-containing protein 14 (Trim14) (Mus musculus (Mouse)).